A 375-amino-acid chain; its full sequence is Alcohol dehydrogenase 1C (375 aa).

Ser2 carries the N-acetylserine modification. Position 23 is a phosphoserine (Ser23). Zn(2+) is bound by residues Cys47, His68, Cys98, Cys101, Cys104, Cys112, and Cys175. Residues 200-205 (GLGGVG), Asp224, Lys229, Ile270, 293-295 (VGV), 318-320 (AIF), and Arg370 contribute to the NAD(+) site.

This sequence belongs to the zinc-containing alcohol dehydrogenase family. As to quaternary structure, dimer of identical or non-identical chains of class I alcohol dehydrogenase: ADH1A, ADH1B, and ADH1C. Requires Zn(2+) as cofactor. As to expression, expressed in kidney.

Its subcellular location is the cytoplasm. The enzyme catalyses a primary alcohol + NAD(+) = an aldehyde + NADH + H(+). It carries out the reaction ethanol + NAD(+) = acetaldehyde + NADH + H(+). Its function is as follows. Alcohol dehydrogenase. Exhibits high activity for ethanol oxidation and plays a major role in ethanol catabolism. The sequence is that of Alcohol dehydrogenase 1C (ADH1C) from Papio hamadryas (Hamadryas baboon).